The primary structure comprises 143 residues: MFLGTYAPKLDEKGRIILPAKFREELASGLVLTRGQEHCVYVFSQREFQSLHEKIRQAPVTSKQARDYLRVFLSGASAEVPDKQNRVTVPPALRSYAGLDRDLVVIGAGSRAEIWDAEAWETYLAKQEAAFANTEEEVIPGLF.

SpoVT-AbrB domains lie at 5–47 and 76–119; these read TYAP…SQRE and ASAE…DAEA.

This sequence belongs to the MraZ family. As to quaternary structure, forms oligomers.

The protein resides in the cytoplasm. Its subcellular location is the nucleoid. The sequence is that of Transcriptional regulator MraZ from Leifsonia xyli subsp. xyli (strain CTCB07).